Here is a 157-residue protein sequence, read N- to C-terminus: 2-C-methyl-D-erythritol 2,4-cyclodiphosphate synthase (157 aa).

A divalent metal cation-binding residues include Asp-8 and His-10. 4-CDP-2-C-methyl-D-erythritol 2-phosphate-binding positions include 8–10 (DVH) and 34–35 (HS). His-42 serves as a coordination point for a divalent metal cation. 4-CDP-2-C-methyl-D-erythritol 2-phosphate-binding positions include 56 to 58 (DIG), 61 to 65 (FPDTD), 100 to 106 (AQKPKMA), 132 to 135 (TTTE), and Phe-139.

The protein belongs to the IspF family. In terms of assembly, homotrimer. A divalent metal cation serves as cofactor.

It catalyses the reaction 4-CDP-2-C-methyl-D-erythritol 2-phosphate = 2-C-methyl-D-erythritol 2,4-cyclic diphosphate + CMP. The protein operates within isoprenoid biosynthesis; isopentenyl diphosphate biosynthesis via DXP pathway; isopentenyl diphosphate from 1-deoxy-D-xylulose 5-phosphate: step 4/6. In terms of biological role, involved in the biosynthesis of isopentenyl diphosphate (IPP) and dimethylallyl diphosphate (DMAPP), two major building blocks of isoprenoid compounds. Catalyzes the conversion of 4-diphosphocytidyl-2-C-methyl-D-erythritol 2-phosphate (CDP-ME2P) to 2-C-methyl-D-erythritol 2,4-cyclodiphosphate (ME-CPP) with a corresponding release of cytidine 5-monophosphate (CMP). This chain is 2-C-methyl-D-erythritol 2,4-cyclodiphosphate synthase, found in Alkaliphilus oremlandii (strain OhILAs) (Clostridium oremlandii (strain OhILAs)).